The primary structure comprises 457 residues: L-asparaginase-like protein GL17509 (457 aa).

The first 20 residues, 1–20, serve as a signal peptide directing secretion; the sequence is MRYLCRAQLLSLLLLPLLKA. 3 disulfide bridges follow: cysteine 72/cysteine 78, cysteine 172/cysteine 188, and cysteine 327/cysteine 354.

Belongs to the Ntn-hydrolase family.

In Drosophila persimilis (Fruit fly), this protein is L-asparaginase-like protein GL17509.